A 61-amino-acid chain; its full sequence is Prophage outer membrane lipoprotein RzoR (61 aa).

The first 19 residues, 1 to 19 (MRKLKMMLCVMMLPLVVVG), serve as a signal peptide directing secretion. Residue cysteine 20 is the site of N-palmitoyl cysteine attachment. Cysteine 20 is lipidated: S-diacylglycerol cysteine.

This sequence belongs to the lambdalikevirus o-spanin family. Homodimer; disulfide-linked. Interacts (via C-terminus) with RZ (via C-terminus). Part of the spanin complex which spans the entire periplasmic space. The spanin complex is composed of spanin, inner membrane subunit and spanin, outer membrane subunit.

The protein localises to the cell outer membrane. Functionally, component of the spanin complex that disrupts the outer membrane and causes cell lysis during virus exit. The spanin complex conducts the final step in cell lysis by disrupting the outer membrane after holin and endolysin action have permeabilized the inner membrane and degraded the host peptidoglycans. The polypeptide is Prophage outer membrane lipoprotein RzoR (rzoR) (Escherichia coli (strain K12)).